A 325-amino-acid polypeptide reads, in one-letter code: Probable tRNA-dihydrouridine synthase 2 (325 aa).

18-20 (PME) is an FMN binding site. Catalysis depends on Cys-105, which acts as the Proton donor. Residues Lys-143, 208–210 (NGD), and 232–233 (GR) contribute to the FMN site.

Belongs to the Dus family. FMN serves as cofactor.

The catalysed reaction is a 5,6-dihydrouridine in tRNA + NAD(+) = a uridine in tRNA + NADH + H(+). The enzyme catalyses a 5,6-dihydrouridine in tRNA + NADP(+) = a uridine in tRNA + NADPH + H(+). Functionally, catalyzes the synthesis of 5,6-dihydrouridine (D), a modified base found in the D-loop of most tRNAs, via the reduction of the C5-C6 double bond in target uridines. The sequence is that of Probable tRNA-dihydrouridine synthase 2 (dus2) from Bacillus subtilis (strain 168).